The primary structure comprises 247 residues: MAEGGASKGEEPEKLPGLAEDEPQVLHGTGHCKWFNVRMGFGFISMISREGNPLDIPVDVFVHQSKLFMEGFRSLKEGEPVEFTFKKSPKGLESIRVTGPGGSPCLGSERRPKGKTLQKRKPKGDRCYNCGGLDHHAKECSLPPQPKKCHYCQSIMHMVANCPHKLAAQLPASSQGRQEAESQPCSSAAPREVGGGHGCTVLFPQEVKSEMAEHSDRSPQEVSSTKAFAAIGEQNKKGPLIQKRKKT.

Residues 1–22 are disordered; sequence MAEGGASKGEEPEKLPGLAEDE. The region spanning 27–100 is the CSD domain; sequence HGTGHCKWFN…GLESIRVTGP (74 aa). Phosphoserine occurs at positions 94, 103, and 108. The disordered stretch occupies residues 96 to 124; it reads RVTGPGGSPCLGSERRPKGKTLQKRKPKG. Residues 112-123 are compositionally biased toward basic residues; the sequence is PKGKTLQKRKPK. CCHC-type zinc fingers lie at residues 125–142 and 147–164; these read DRCY…ECSL and KKCH…NCPH. 8 residues coordinate Zn(2+): Cys-127, Cys-130, His-135, Cys-140, Cys-149, Cys-152, His-157, and Cys-162. Residues 173 to 186 are compositionally biased toward polar residues; that stretch reads SSQGRQEAESQPCS. Positions 173–247 are disordered; it reads SSQGRQEAES…GPLIQKRKKT (75 aa). Residues 207–219 show a composition bias toward basic and acidic residues; sequence VKSEMAEHSDRSP.

Belongs to the lin-28 family.

Its subcellular location is the nucleus. It localises to the nucleolus. In terms of biological role, suppressor of microRNA (miRNA) biogenesis, including that of let-7 and possibly of miR107, miR-143 and miR-200c. Binds primary let-7 transcripts (pri-let-7), including pri-let-7g and pri-let-7a-1, and sequester them in the nucleolus, away from the microprocessor complex, hence preventing their processing into mature miRNA. Does not act on pri-miR21. The repression of let-7 expression is required for normal development and contributes to maintain the pluripotent state of embryonic stem cells by preventing let-7-mediated differentiation. When overexpressed, recruits ZCCHC11/TUT4 uridylyltransferase to pre-let-7 transcripts, leading to their terminal uridylation and degradation. This activity might not be relevant in vivo, as LIN28B-mediated inhibition of let-7 miRNA maturation appears to be ZCCHC11-independent. Interaction with target pre-miRNAs occurs via an 5'-GGAG-3' motif in the pre-miRNA terminal loop. Mediates MYC-induced let-7 repression. When overexpressed, may stimulate growth of carcinoma cell lines. The sequence is that of Protein lin-28 homolog B (Lin28b) from Mus musculus (Mouse).